The chain runs to 477 residues: UDP-N-acetylmuramate--L-alanine ligase (477 aa).

Residue 120–126 (GSHGKTT) participates in ATP binding.

Belongs to the MurCDEF family.

Its subcellular location is the cytoplasm. The enzyme catalyses UDP-N-acetyl-alpha-D-muramate + L-alanine + ATP = UDP-N-acetyl-alpha-D-muramoyl-L-alanine + ADP + phosphate + H(+). It participates in cell wall biogenesis; peptidoglycan biosynthesis. Functionally, cell wall formation. In Rickettsia canadensis (strain McKiel), this protein is UDP-N-acetylmuramate--L-alanine ligase.